A 449-amino-acid polypeptide reads, in one-letter code: Exodeoxyribonuclease 7 large subunit (449 aa).

The protein belongs to the XseA family. In terms of assembly, heterooligomer composed of large and small subunits.

It localises to the cytoplasm. It carries out the reaction Exonucleolytic cleavage in either 5'- to 3'- or 3'- to 5'-direction to yield nucleoside 5'-phosphates.. Functionally, bidirectionally degrades single-stranded DNA into large acid-insoluble oligonucleotides, which are then degraded further into small acid-soluble oligonucleotides. The polypeptide is Exodeoxyribonuclease 7 large subunit (Salmonella typhi).